The following is a 385-amino-acid chain: Chaperone protein DnaJ (385 aa).

The region spanning 5–70 is the J domain; it reads DYYEVLGVSK…ERKAAYDRYG (66 aa). The segment at 143–221 adopts a CR-type zinc-finger fold; it reads GLHKTINVPT…CNGHGRVEKD (79 aa). Residues Cys156, Cys159, Cys173, Cys176, Cys195, Cys198, Cys209, and Cys212 each coordinate Zn(2+). 4 CXXCXGXG motif repeats span residues 156-163, 173-180, 195-202, and 209-216; these read CTSCEGTG, CPTCSGMG, CPTCSGLG, and CKTCNGHG.

Belongs to the DnaJ family. In terms of assembly, homodimer. Requires Zn(2+) as cofactor.

It is found in the cytoplasm. In terms of biological role, participates actively in the response to hyperosmotic and heat shock by preventing the aggregation of stress-denatured proteins and by disaggregating proteins, also in an autonomous, DnaK-independent fashion. Unfolded proteins bind initially to DnaJ; upon interaction with the DnaJ-bound protein, DnaK hydrolyzes its bound ATP, resulting in the formation of a stable complex. GrpE releases ADP from DnaK; ATP binding to DnaK triggers the release of the substrate protein, thus completing the reaction cycle. Several rounds of ATP-dependent interactions between DnaJ, DnaK and GrpE are required for fully efficient folding. Also involved, together with DnaK and GrpE, in the DNA replication of plasmids through activation of initiation proteins. In Ruegeria sp. (strain TM1040) (Silicibacter sp.), this protein is Chaperone protein DnaJ.